The following is a 281-amino-acid chain: Nucleotide-binding protein Noc_2797 (281 aa).

ATP is bound at residue 8–15 (GVSGSGKS). 58–61 (DARN) is a binding site for GTP.

This sequence belongs to the RapZ-like family.

Displays ATPase and GTPase activities. The protein is Nucleotide-binding protein Noc_2797 of Nitrosococcus oceani (strain ATCC 19707 / BCRC 17464 / JCM 30415 / NCIMB 11848 / C-107).